The primary structure comprises 269 residues: Ubiquinone/menaquinone biosynthesis C-methyltransferase UbiE (269 aa).

Residues Thr-92, Asp-113, and 141–142 (NA) contribute to the S-adenosyl-L-methionine site.

Belongs to the class I-like SAM-binding methyltransferase superfamily. MenG/UbiE family.

It catalyses the reaction a 2-demethylmenaquinol + S-adenosyl-L-methionine = a menaquinol + S-adenosyl-L-homocysteine + H(+). The catalysed reaction is a 2-methoxy-6-(all-trans-polyprenyl)benzene-1,4-diol + S-adenosyl-L-methionine = a 5-methoxy-2-methyl-3-(all-trans-polyprenyl)benzene-1,4-diol + S-adenosyl-L-homocysteine + H(+). It functions in the pathway quinol/quinone metabolism; menaquinone biosynthesis; menaquinol from 1,4-dihydroxy-2-naphthoate: step 2/2. It participates in cofactor biosynthesis; ubiquinone biosynthesis. Methyltransferase required for the conversion of demethylmenaquinol (DMKH2) to menaquinol (MKH2) and the conversion of 2-polyprenyl-6-methoxy-1,4-benzoquinol (DDMQH2) to 2-polyprenyl-3-methyl-6-methoxy-1,4-benzoquinol (DMQH2). The sequence is that of Ubiquinone/menaquinone biosynthesis C-methyltransferase UbiE from Brucella suis biovar 1 (strain 1330).